The following is a 448-amino-acid chain: Deoxyguanosinetriphosphate triphosphohydrolase-like protein (448 aa).

The 194-residue stretch at 67 to 260 folds into the HD domain; it reads RLTHSLEVSQ…MELADDIAYG (194 aa).

This sequence belongs to the dGTPase family. Type 2 subfamily.

The sequence is that of Deoxyguanosinetriphosphate triphosphohydrolase-like protein from Aliivibrio salmonicida (strain LFI1238) (Vibrio salmonicida (strain LFI1238)).